The sequence spans 158 residues: U-limacoditoxin(8)-Dv66 (158 aa).

Residues Met1 to Thr24 form the signal peptide. A propeptide spanning residues Arg25–Arg32 is cleaved from the precursor. Repeat copies occupy residues Gly33–Arg78 and Gly79–Arg124. Residues Gly33 to Lys158 are 3 X 46 AA tandem repeats. The residue at position 63 (Pro63) is a Proline amide. A propeptide spanning residues Gly64–Arg78 is cleaved from the precursor. The interval Ala101–Glu120 is disordered. Pro109 is modified (proline amide). A propeptide spanning residues Gly110–Arg124 is cleaved from the precursor. Residues Gly125 to Lys158 form a 3; half-length repeat. Pro155 is modified (proline amide).

It belongs to the diuretic hormone class 2 family. In terms of tissue distribution, expressed by the venom secretory cell of the spine. The spine is a cuticular structure containing a single large nucleated venom-secreting cell at its base. It is an independent unit capable of producing, storing and injecting venom. On the back of D.vulnerans caterpillars, spines are grouped together by 50 to 100 to form scoli, of which there are eight in D.vulnerans.

The protein resides in the secreted. Probable toxin. Does not show insecticidal, antimicrobial and antiparasitic activities. Does not induce increase in intracellular calcium in mouse DRG neurons, suggesting that it does not induce pain. In Doratifera vulnerans (Mottled cup moth), this protein is U-limacoditoxin(8)-Dv66.